Here is a 211-residue protein sequence, read N- to C-terminus: LexA repressor (211 aa).

The segment at residues 27–47 (QTEIARAFGFKGVRAVQHHLD) is a DNA-binding region (H-T-H motif). Catalysis depends on for autocatalytic cleavage activity residues Ser131 and Lys168.

It belongs to the peptidase S24 family. As to quaternary structure, homodimer.

The catalysed reaction is Hydrolysis of Ala-|-Gly bond in repressor LexA.. Represses a number of genes involved in the response to DNA damage (SOS response), including recA and lexA. In the presence of single-stranded DNA, RecA interacts with LexA causing an autocatalytic cleavage which disrupts the DNA-binding part of LexA, leading to derepression of the SOS regulon and eventually DNA repair. The chain is LexA repressor from Xylella fastidiosa (strain M12).